Reading from the N-terminus, the 450-residue chain is tRNA modification GTPase MnmE (450 aa).

3 residues coordinate (6S)-5-formyl-5,6,7,8-tetrahydrofolate: R23, E80, and R123. Residues 219–372 (GLHVVLAGKP…LRQRLLQLAG (154 aa)) form the TrmE-type G domain. Position 229 (N229) interacts with K(+). Residues 229–234 (NVGKSS), 248–254 (TPIAGTT), 273–276 (DTAG), and 353–355 (SAR) each bind GTP. Position 233 (S233) interacts with Mg(2+). K(+) is bound by residues T248, I250, and T253. Position 254 (T254) interacts with Mg(2+). K450 lines the (6S)-5-formyl-5,6,7,8-tetrahydrofolate pocket.

The protein belongs to the TRAFAC class TrmE-Era-EngA-EngB-Septin-like GTPase superfamily. TrmE GTPase family. Homodimer. Heterotetramer of two MnmE and two MnmG subunits. Requires K(+) as cofactor.

Its subcellular location is the cytoplasm. In terms of biological role, exhibits a very high intrinsic GTPase hydrolysis rate. Involved in the addition of a carboxymethylaminomethyl (cmnm) group at the wobble position (U34) of certain tRNAs, forming tRNA-cmnm(5)s(2)U34. This Bordetella bronchiseptica (strain ATCC BAA-588 / NCTC 13252 / RB50) (Alcaligenes bronchisepticus) protein is tRNA modification GTPase MnmE.